Consider the following 518-residue polypeptide: DNA-binding protein Ikaros (518 aa).

The segment at 1 to 51 (METDEAQDMSQVSGKESPPISDVPDDADEPMPVPEDLSTTTGGQQSVKNER) is disordered. Residues 37–47 (LSTTTGGQQSV) are compositionally biased toward polar residues. 4 C2H2-type zinc fingers span residues 117-139 (LKCD…NRSH), 145-167 (FQCN…IKLH), 173-195 (FKCH…LRTH), and 201-224 (HKCG…ERCH). A disordered region spans residues 381–405 (SVSSERDASPSNSCQDSTDTESNNE). C2H2-type zinc fingers lie at residues 461–483 (YKCE…MGCH) and 489–513 (FECN…RGEH).

The protein belongs to the Ikaros C2H2-type zinc-finger protein family. In terms of tissue distribution, expressed in embryonic hematopoietic organs such as the bursa of Fabricius, thymus and spleen. In the adult, expressed in spleen, thymus, bursa and peripheral blood leukocytes.

The protein resides in the nucleus. Binds and activates the enhancer (delta-A element) of the CD3-delta gene. Functions in the specification and the maturation of the T-lymphocyte. Also interacts with a critical control element in the TDT (terminal deoxynucleotidyltransferase) promoter as well as with the promoters for other genes expressed during early stages of B- and T-cell development. Function is isoform-specific and is modulated by dominant-negative inactive isoforms. In Gallus gallus (Chicken), this protein is DNA-binding protein Ikaros (IKZF1).